Here is a 358-residue protein sequence, read N- to C-terminus: MAATLGSGERWTEAYIDAVRRNKYPEDRPPESHDPCGCCNCMKGQKEKKSENEWSQTRQGEGNSTYTEEQLLGVQRIKKCRNYYEILGVSRDASDEELKKAYRKLALKFHPDKNCAPGATDAFKAIGNAFAVLSNPDKRLRYDEYGDEQVTFTAPRARPYNYYRDFETDITPEELFNVFFGGHFPTGNIHMFSNVTDDTHYYRRRHRHERMQTRKEEEEDKPQTTYSAFIQLLPVLVIVIISVITQLLAANPPYSLFYKSTLGHTISRETQNLQVPYFVDKNFDKAYRGASLRDLEKTIEKDYIDYIQTSCWKEKQQKSELTNLAGLYRDERLKQKAESLKLENCEKLSKLIGLRRGG.

Residues 82 to 146 form the J domain; sequence NYYEILGVSR…DKRLRYDEYG (65 aa). Residues 228 to 248 traverse the membrane as a helical segment; it reads AFIQLLPVLVIVIISVITQLL.

Its subcellular location is the endoplasmic reticulum membrane. The polypeptide is DnaJ homolog subfamily C member 18 (DNAJC18) (Bos taurus (Bovine)).